A 280-amino-acid polypeptide reads, in one-letter code: Trypsin zeta (280 aa).

A signal peptide spans Met-1 to Gly-22. The propeptide at Leu-23–Arg-38 is activation peptide. One can recognise a Peptidase S1 domain in the interval Ile-39–Ala-278. A disulfide bridge links Cys-72 with Cys-88. Active-site charge relay system residues include His-87 and Asp-134. 2 disulfide bridges follow: Cys-198–Cys-218 and Cys-230–Cys-254. Catalysis depends on Ser-234, which acts as the Charge relay system.

This sequence belongs to the peptidase S1 family.

It is found in the secreted. It localises to the extracellular space. It carries out the reaction Preferential cleavage: Arg-|-Xaa, Lys-|-Xaa.. The sequence is that of Trypsin zeta (zetaTry) from Drosophila melanogaster (Fruit fly).